Here is a 374-residue protein sequence, read N- to C-terminus: Multicilin (374 aa).

The stretch at 164 to 212 forms a coiled coil; it reads EQYWRDVADHNQKALGDALVENNQLQVSLTEKQEEIVSLKEKNIQLNEL. A disordered region spans residues 230–260; the sequence is RTKQNSGATQGRLPVKRSLEDFYPQSNEPDS. The tract at residues 330-374 is TIRT domain; it reads TDLEDVSFRTSIKEHSTIRTLAFPQGNAFTIRTSGGGYKFRWVPN.

Belongs to the geminin family. As to quaternary structure, component of the EDM complex, at least composed of e2f4, e2f5, mcidas and tfdp1. As to expression, expressed in multiciliate differentiating cells. Expression is lost by stage 26, when multiciliate cells in the skin are fully differentiated, but is then detected in the developing nephrostomes of the kidneys where multiciliate cells form at later stages.

The protein resides in the nucleus. Functionally, transcription regulator specifically required for multiciliate cell differentiation. Acts in a multiprotein complex containing E2F4 and E2F5 that binds and activates genes required for centriole biogenesis. Activates genes required for centriole assembly (plk4, cep152) and genes specifically required for motile cilia formation (foxj1). Also promotes the deuterosome pathway of centriole biogenesis by activating expression of ccdc67/deup1, but not its paralog cep63. This chain is Multicilin (mcidas), found in Xenopus laevis (African clawed frog).